We begin with the raw amino-acid sequence, 372 residues long: N-methyl-L-tryptophan oxidase (372 aa).

An FAD-binding site is contributed by 4–34 (DLIIIGSGSVGAAAGYYATRAGLKVLMTDAH). Cysteine 307 is modified (S-8alpha-FAD cysteine).

The protein belongs to the MSOX/MTOX family. MTOX subfamily. As to quaternary structure, monomer. Requires FAD as cofactor.

The enzyme catalyses N(alpha)-methyl-L-tryptophan + O2 + H2O = L-tryptophan + formaldehyde + H2O2. In terms of biological role, catalyzes the oxidative demethylation of N-methyl-L-tryptophan. The chain is N-methyl-L-tryptophan oxidase from Salmonella newport (strain SL254).